A 63-amino-acid chain; its full sequence is Large ribosomal subunit protein bL28 (63 aa).

This sequence belongs to the bacterial ribosomal protein bL28 family.

The protein is Large ribosomal subunit protein bL28 of Clostridium botulinum (strain ATCC 19397 / Type A).